Consider the following 411-residue polypeptide: Protein PHLOEM PROTEIN 2-LIKE A5 (411 aa).

Residues 20–157 form the TIR domain; it reads TGPQVFINFR…KWTEALFSVC (138 aa). Glutamate 94 is a catalytic residue.

The catalysed reaction is NAD(+) + H2O = ADP-D-ribose + nicotinamide + H(+). The chain is Protein PHLOEM PROTEIN 2-LIKE A5 (PP2A5) from Arabidopsis thaliana (Mouse-ear cress).